The following is a 1288-amino-acid chain: Symplekin (1288 aa).

Residues 1 to 124 form an interaction with HSF1 region; the sequence is MASSSGDSVT…NMLLRDENVN (124 aa). Ser-13 is modified (phosphoserine). HEAT repeat units follow at residues 31 to 64, 67 to 101, 104 to 146, 153 to 192, and 227 to 266; these read TTSE…LIIN, PTLL…EACK, IELL…WMVK, LQEA…GLIV, and VLWE…IARQ. The tract at residues 335 to 392 is disordered; that stretch reads IARNMPSSKDSRKRPRDDTDSTLKKMKLEPNLGEDDEDKDLEPGPSGTSKASAQISGQ. Residues 345–360 carry the Nuclear localization signal motif; sequence SRKRPRDDTDSTLKKM. The segment covering 349–362 has biased composition (basic and acidic residues); sequence PRDDTDSTLKKMKL. Residue Lys-361 forms a Glycyl lysine isopeptide (Lys-Gly) (interchain with G-Cter in SUMO1); alternate linkage. Lys-361 participates in a covalent cross-link: Glycyl lysine isopeptide (Lys-Gly) (interchain with G-Cter in SUMO2); alternate. Residues 380–392 show a composition bias toward polar residues; it reads SGTSKASAQISGQ. A Glycyl lysine isopeptide (Lys-Gly) (interchain with G-Cter in SUMO2) cross-link involves residue Lys-483. Phosphoserine is present on Ser-494. Disordered regions lie at residues 1130 to 1151 and 1163 to 1288; these read PAPA…PPQD and LKRQ…KGNS. Over residues 1131–1149 the composition is skewed to pro residues; the sequence is APAPAPAPAPAPAPAPRPP. Residues 1163-1173 show a composition bias toward basic and acidic residues; the sequence is LKRQLEEEQKQ. 2 positions are modified to phosphoserine: Ser-1238 and Ser-1239. Lys-1256 is covalently cross-linked (Glycyl lysine isopeptide (Lys-Gly) (interchain with G-Cter in SUMO1)). At Ser-1260 the chain carries Phosphoserine. A compositionally biased stretch (basic and acidic residues) spans 1267 to 1288; the sequence is AVEEALKTSSPETREPESKGNS. Phosphothreonine is present on Thr-1274. Ser-1276 carries the post-translational modification Phosphoserine.

This sequence belongs to the Symplekin family. In terms of assembly, found in a heat-sensitive complex at least composed of several cleavage and polyadenylation specific and cleavage stimulation factors. Interacts with CPSF2, CPSF3 and CSTF2. Interacts (via N-terminus) with HSF1; this interaction is direct and occurs upon heat shock. Interacts with SSU72.

The protein resides in the cytoplasm. It is found in the cytoskeleton. Its subcellular location is the cell junction. It localises to the tight junction. The protein localises to the cell membrane. The protein resides in the nucleus. It is found in the nucleoplasm. Its function is as follows. Scaffold protein that functions as a component of a multimolecular complex involved in histone mRNA 3'-end processing. Specific component of the tight junction (TJ) plaque, but might not be an exclusively junctional component. May have a house-keeping rule. Is involved in pre-mRNA polyadenylation. Enhances SSU72 phosphatase activity. In Mus musculus (Mouse), this protein is Symplekin (Sympk).